The chain runs to 122 residues: MTNNDKIVAIVTSIAVICISLTVIFCDTLVLAVGVPTLVLLWLVFLGWINNKKLDKGEMRRAITGSIVIAFFIILIAISKNPDIYSNNKEIFSLFFGMVTTIIGYYFGYRSGKESKNSSGNE.

The next 4 helical transmembrane spans lie at 7-27, 29-49, 62-82, and 89-109; these read IVAI…IFCD, LVLA…LGWI, AITG…SKNP, and KEIF…YFGY.

Its subcellular location is the cell membrane. This is an uncharacterized protein from Methanocaldococcus jannaschii (strain ATCC 43067 / DSM 2661 / JAL-1 / JCM 10045 / NBRC 100440) (Methanococcus jannaschii).